The sequence spans 359 residues: tRNA-specific 2-thiouridylase MnmA (359 aa).

ATP contacts are provided by residues 7 to 14 (GLSGGVDS) and leucine 33. Catalysis depends on cysteine 94, which acts as the Nucleophile. Cysteine 94 and cysteine 193 are disulfide-bonded. Position 119 (glycine 119) interacts with ATP. The interaction with tRNA stretch occupies residues 143–145 (KDQ). Cysteine 193 serves as the catalytic Cysteine persulfide intermediate. An interaction with tRNA region spans residues 298-299 (RY).

The protein belongs to the MnmA/TRMU family.

Its subcellular location is the cytoplasm. The catalysed reaction is S-sulfanyl-L-cysteinyl-[protein] + uridine(34) in tRNA + AH2 + ATP = 2-thiouridine(34) in tRNA + L-cysteinyl-[protein] + A + AMP + diphosphate + H(+). Functionally, catalyzes the 2-thiolation of uridine at the wobble position (U34) of tRNA, leading to the formation of s(2)U34. This chain is tRNA-specific 2-thiouridylase MnmA, found in Trichodesmium erythraeum (strain IMS101).